The following is a 410-amino-acid chain: Lissencephaly-1 homolog (410 aa).

One can recognise a LisH domain in the interval 7 to 39 (QQEELQLAVHAYLVEAGHAEAAAAMAKSANLGD). Residues 55–80 (TTITRLQKRNMELQAEVEELRSSARA) are a coiled coil. 7 WD repeats span residues 104–143 (GHRL…FERS), 146–185 (GHTN…CTKT), 188–227 (GHDH…CLQT), 230–269 (GHSD…CKHV), 294–333 (MIFG…HLAR), 336–375 (GHDN…VSKT), and 378–410 (AHNH…WECN).

The protein belongs to the WD repeat LIS1/nudF family.

Its subcellular location is the cytoplasm. The protein resides in the cytoskeleton. It localises to the microtubule organizing center. It is found in the centrosome. Functionally, positively regulates the activity of the minus-end directed microtubule motor protein dynein. May enhance dynein-mediated microtubule sliding by targeting dynein to the microtubule plus end. Required for several dynein- and microtubule-dependent processes. The chain is Lissencephaly-1 homolog from Monosiga brevicollis (Choanoflagellate).